The following is a 488-amino-acid chain: Glutamyl-tRNA(Gln) amidotransferase subunit A (488 aa).

Active-site charge relay system residues include K77 and S152. S176 functions as the Acyl-ester intermediate in the catalytic mechanism.

This sequence belongs to the amidase family. GatA subfamily. Heterotrimer of A, B and C subunits.

It carries out the reaction L-glutamyl-tRNA(Gln) + L-glutamine + ATP + H2O = L-glutaminyl-tRNA(Gln) + L-glutamate + ADP + phosphate + H(+). Functionally, allows the formation of correctly charged Gln-tRNA(Gln) through the transamidation of misacylated Glu-tRNA(Gln) in organisms which lack glutaminyl-tRNA synthetase. The reaction takes place in the presence of glutamine and ATP through an activated gamma-phospho-Glu-tRNA(Gln). The polypeptide is Glutamyl-tRNA(Gln) amidotransferase subunit A (Streptococcus pyogenes serotype M4 (strain MGAS10750)).